The chain runs to 413 residues: NPL4-like protein 1 (413 aa).

Serine 104 carries the phosphoserine modification. Residues 131 to 272 (SVSFDRDCAN…ADVHFEPFQM (142 aa)) enclose the MPN domain.

Belongs to the NPL4 family.

Its pathway is protein degradation; proteasomal ubiquitin-dependent pathway. May be part of a complex that binds ubiquitinated proteins and that is necessary for the export of misfolded proteins from the ER to the cytoplasm, where they are degraded by the proteasome. The chain is NPL4-like protein 1 from Arabidopsis thaliana (Mouse-ear cress).